The sequence spans 1951 residues: [F-actin]-monooxygenase MICAL2 (1951 aa).

The tract at residues Gly2–Asp494 is monooxygenase domain. Residues Cys97, Glu116 to Arg118, Arg123 to Asn125, Phe183, Tyr298, and Asp398 each bind FAD. Residues Asp516 to Glu619 enclose the Calponin-homology (CH) domain. At Ser631 the chain carries Phosphoserine. Positions Arg660–Gln681 match the Nuclear localization signal motif. 2 disordered regions span residues Thr663 to Lys712 and Lys891 to Ser921. Residues Ser691 to Ser700 are compositionally biased toward low complexity. Residues Ala896–His909 are compositionally biased toward pro residues. Residues Pro910–Ser921 show a composition bias toward low complexity. In terms of domain architecture, LIM zinc-binding spans Asp991–Ser1053. Zn(2+) is bound by residues Cys993, Cys996, His1014, Cys1017, Cys1020, Cys1023, Cys1043, and His1046. At Thr1052 the chain carries Phosphoserine. Disordered stretches follow at residues Ser1054–Pro1141, Thr1158–Thr1314, Val1348–Gln1368, Ile1383–Gly1427, His1451–Ser1476, Gln1489–Ala1580, Ala1594–Pro1624, Gly1678–Leu1697, Ser1706–Gly1731, and Pro1747–Ser1766. Residues Ala1061–Glu1070 show a composition bias toward basic and acidic residues. Polar residues-rich tracts occupy residues Pro1129–Arg1138, His1228–Gln1239, and Gln1246–Ala1256. Pro residues predominate over residues Pro1257–Ser1268. A compositionally biased stretch (low complexity) spans Leu1269–Pro1285. A compositionally biased stretch (polar residues) spans Asp1291–Ile1306. The segment at Thr1314 to Glu1353 is interaction with MAPK1. Residues Pro1350–Glu1359 are compositionally biased toward basic and acidic residues. Basic and acidic residues predominate over residues Glu1532–Thr1545. Low complexity predominate over residues Leu1599–Ser1616. A compositionally biased stretch (basic and acidic residues) spans Gly1678–Gly1688. Ser1683 bears the Phosphoserine mark. Residues Ser1706–Gln1720 are compositionally biased toward polar residues. Low complexity predominate over residues Thr1749–Ser1759. Residues Lys1789 to Asn1939 enclose the bMERB domain.

It belongs to the Mical family. In terms of assembly, interacts with PLXNA4. Interacts with RAB1B. Interacts with MAPK1/ERK2. Interacts with RAB1B, RAB35, RAB8A, RAB10, RAB13 and RAB15 (in their GTP-bound forms); binding to RAB1B and RAB35 is of low affinity compared to other Rab proteins; binding to RAB1B and RAB35 is of low affinity compared to other Rab proteins; at least in case of RAB8A may bind 2 molecules of RAB8A simultaneously through a high and a low affinity binding site, respectively. FAD serves as cofactor. Expressed only in testis (at protein level).

The protein resides in the cytoplasm. The protein localises to the nucleus. The enzyme catalyses L-methionyl-[F-actin] + NADPH + O2 + H(+) = L-methionyl-(R)-S-oxide-[F-actin] + NADP(+) + H2O. Methionine monooxygenase that promotes depolymerization of F-actin by mediating oxidation of residues 'Met-44' and 'Met-47' on actin to form methionine-sulfoxide, resulting in actin filament disassembly and preventing repolymerization. Regulates the disassembly of branched actin networks also by oxidizing ARP3B-containing ARP2/3 complexes leading to ARP3B dissociation from the network. Acts as a key regulator of the SRF signaling pathway elicited by nerve growth factor and serum: mediates oxidation and subsequent depolymerization of nuclear actin, leading to increase MKL1/MRTF-A presence in the nucleus and promote SRF:MKL1/MRTF-A-dependent gene transcription. Does not activate SRF:MKL1/MRTF-A through RhoA. In Mus musculus (Mouse), this protein is [F-actin]-monooxygenase MICAL2.